A 644-amino-acid chain; its full sequence is ATP-dependent zinc metalloprotease FtsH (644 aa).

The Stromal segment spans residues 1 to 11 (MNDNKNNTVRN). A helical transmembrane segment spans residues 12-32 (LLIGIALLSGISLTAKKFDLI). Residues 33–128 (GVQGSESGKN…FDAHPAEQKN (96 aa)) are Lumenal-facing. A helical transmembrane segment spans residues 129–149 (IFVNILSNILLPIIFITGLVY). The Stromal portion of the chain corresponds to 150–644 (LFQNSENFGG…KNIPYVSKFN (495 aa)). Residue 226–233 (GPPGTGKT) participates in ATP binding. Histidine 447 is a binding site for Zn(2+). Glutamate 448 is a catalytic residue. Residues histidine 451 and aspartate 525 each contribute to the Zn(2+) site.

In the central section; belongs to the AAA ATPase family. It in the C-terminal section; belongs to the peptidase M41 family. As to quaternary structure, homohexamer. Requires Zn(2+) as cofactor.

The protein resides in the plastid. Its subcellular location is the chloroplast thylakoid membrane. Its function is as follows. Acts as a processive, ATP-dependent zinc metallopeptidase. The polypeptide is ATP-dependent zinc metalloprotease FtsH (Trieres chinensis (Marine centric diatom)).